A 466-amino-acid chain; its full sequence is 3-isopropylmalate dehydratase large subunit (466 aa).

Residues Cys-347, Cys-407, and Cys-410 each coordinate [4Fe-4S] cluster.

Belongs to the aconitase/IPM isomerase family. LeuC type 1 subfamily. As to quaternary structure, heterodimer of LeuC and LeuD. It depends on [4Fe-4S] cluster as a cofactor.

The enzyme catalyses (2R,3S)-3-isopropylmalate = (2S)-2-isopropylmalate. It functions in the pathway amino-acid biosynthesis; L-leucine biosynthesis; L-leucine from 3-methyl-2-oxobutanoate: step 2/4. Functionally, catalyzes the isomerization between 2-isopropylmalate and 3-isopropylmalate, via the formation of 2-isopropylmaleate. This is 3-isopropylmalate dehydratase large subunit from Shigella sonnei (strain Ss046).